The following is a 274-amino-acid chain: S-adenosylmethionine decarboxylase proenzyme (274 aa).

The active-site Schiff-base intermediate with substrate; via pyruvic acid is serine 119. Position 119 is a pyruvic acid (Ser); by autocatalysis (serine 119). The Proton acceptor; for processing activity role is filled by histidine 124. The active-site Proton donor; for catalytic activity is the cysteine 147.

Belongs to the prokaryotic AdoMetDC family. Type 2 subfamily. Heterooctamer of four alpha and four beta chains arranged as a tetramer of alpha/beta heterodimers. It depends on pyruvate as a cofactor. In terms of processing, is synthesized initially as an inactive proenzyme. Formation of the active enzyme involves a self-maturation process in which the active site pyruvoyl group is generated from an internal serine residue via an autocatalytic post-translational modification. Two non-identical subunits are generated from the proenzyme in this reaction, and the pyruvate is formed at the N-terminus of the alpha chain, which is derived from the carboxyl end of the proenzyme. The post-translation cleavage follows an unusual pathway, termed non-hydrolytic serinolysis, in which the side chain hydroxyl group of the serine supplies its oxygen atom to form the C-terminus of the beta chain, while the remainder of the serine residue undergoes an oxidative deamination to produce ammonia and the pyruvoyl group blocking the N-terminus of the alpha chain.

The catalysed reaction is S-adenosyl-L-methionine + H(+) = S-adenosyl 3-(methylsulfanyl)propylamine + CO2. It functions in the pathway amine and polyamine biosynthesis; S-adenosylmethioninamine biosynthesis; S-adenosylmethioninamine from S-adenosyl-L-methionine: step 1/1. Its function is as follows. Catalyzes the decarboxylation of S-adenosylmethionine to S-adenosylmethioninamine (dcAdoMet), the propylamine donor required for the synthesis of the polyamines spermine and spermidine from the diamine putrescine. This chain is S-adenosylmethionine decarboxylase proenzyme, found in Clostridium acetobutylicum (strain ATCC 824 / DSM 792 / JCM 1419 / IAM 19013 / LMG 5710 / NBRC 13948 / NRRL B-527 / VKM B-1787 / 2291 / W).